A 190-amino-acid polypeptide reads, in one-letter code: Glutathione peroxidase 2 (190 aa).

Sec40 is an active-site residue. Sec40 is a non-standard amino acid (selenocysteine).

It belongs to the glutathione peroxidase family. As to quaternary structure, homotetramer. Mucosal epithelium of the gastrointestinal tract.

It localises to the cytoplasm. It is found in the cytosol. It catalyses the reaction 2 glutathione + H2O2 = glutathione disulfide + 2 H2O. It carries out the reaction a hydroperoxy polyunsaturated fatty acid + 2 glutathione = a hydroxy polyunsaturated fatty acid + glutathione disulfide + H2O. The enzyme catalyses tert-butyl hydroperoxide + 2 glutathione = tert-butanol + glutathione disulfide + H2O. The catalysed reaction is cumene hydroperoxide + 2 glutathione = 2-phenylpropan-2-ol + glutathione disulfide + H2O. It catalyses the reaction (13S)-hydroperoxy-(9Z,11E)-octadecadienoate + 2 glutathione = (13S)-hydroxy-(9Z,11E)-octadecadienoate + glutathione disulfide + H2O. It carries out the reaction (5S)-hydroperoxy-(6E,8Z,11Z,14Z)-eicosatetraenoate + 2 glutathione = (5S)-hydroxy-(6E,8Z,11Z,14Z)-eicosatetraenoate + glutathione disulfide + H2O. The enzyme catalyses (12R)-hydroperoxy-(5Z,8Z,10E,14Z)-eicosatetraenoate + 2 glutathione = (12R)-hydroxy-(5Z,8Z,10E,14Z)-eicosatetraenoate + glutathione disulfide + H2O. The catalysed reaction is (15S)-hydroperoxy-(5Z,8Z,11Z,13E)-eicosatetraenoate + 2 glutathione = (15S)-hydroxy-(5Z,8Z,11Z,13E)-eicosatetraenoate + glutathione disulfide + H2O. Functionally, catalyzes the reduction of hydroperoxides in a glutathione-dependent manner thus regulating cellular redox homeostasis. Can reduce small soluble hydroperoxide such as H2O2. Can reduce cumene hydroperoxide and tert-butyl hydroperoxide, as well as several fatty acid-derived hydroperoxides. Cannot reduce phosphatidycholine hydroperoxide. The sequence is that of Glutathione peroxidase 2 (Gpx2) from Rattus norvegicus (Rat).